The following is a 742-amino-acid chain: Polyphosphate kinase (742 aa).

Asn91 serves as a coordination point for ATP. The Mg(2+) site is built by Arg431 and Arg461. The active-site Phosphohistidine intermediate is His491. Residues Tyr524, Arg624, and His652 each coordinate ATP. Residues 718 to 742 form a disordered region; it reads WTASPQEGHSVRDHQESLMERHRSP. Residues 726 to 742 are compositionally biased toward basic and acidic residues; that stretch reads HSVRDHQESLMERHRSP.

The protein belongs to the polyphosphate kinase 1 (PPK1) family. Mg(2+) is required as a cofactor. Post-translationally, an intermediate of this reaction is the autophosphorylated ppk in which a phosphate is covalently linked to a histidine residue through a N-P bond.

The catalysed reaction is [phosphate](n) + ATP = [phosphate](n+1) + ADP. Its function is as follows. Catalyzes the reversible transfer of the terminal phosphate of ATP to form a long-chain polyphosphate (polyP). This is Polyphosphate kinase from Mycobacterium bovis (strain ATCC BAA-935 / AF2122/97).